A 336-amino-acid chain; its full sequence is Probable allantoicase 2 (336 aa).

The protein belongs to the allantoicase family.

It carries out the reaction allantoate + H2O = (S)-ureidoglycolate + urea. The protein operates within nitrogen metabolism; (S)-allantoin degradation; (S)-ureidoglycolate from allantoate (aminidohydrolase route): step 1/1. The chain is Probable allantoicase 2 from Burkholderia pseudomallei (strain K96243).